The following is a 204-amino-acid chain: Holliday junction branch migration complex subunit RuvA (204 aa).

Residues 1 to 64 (MIGKLKGTLE…EEAIRLFGFA (64 aa)) form a domain I region. Residues 65-143 (TRAEQEWFCM…PFEQAVKTVS (79 aa)) are domain II. The interval 144 to 154 (VPQREITHQPA) is flexible linker. A domain III region spans residues 154-204 (AHDALSALMKLGFEREQAARALALAMNALEGEAVSSALLIRHSLKLLSSPT).

It belongs to the RuvA family. As to quaternary structure, homotetramer. Forms an RuvA(8)-RuvB(12)-Holliday junction (HJ) complex. HJ DNA is sandwiched between 2 RuvA tetramers; dsDNA enters through RuvA and exits via RuvB. An RuvB hexamer assembles on each DNA strand where it exits the tetramer. Each RuvB hexamer is contacted by two RuvA subunits (via domain III) on 2 adjacent RuvB subunits; this complex drives branch migration. In the full resolvosome a probable DNA-RuvA(4)-RuvB(12)-RuvC(2) complex forms which resolves the HJ.

Its subcellular location is the cytoplasm. Functionally, the RuvA-RuvB-RuvC complex processes Holliday junction (HJ) DNA during genetic recombination and DNA repair, while the RuvA-RuvB complex plays an important role in the rescue of blocked DNA replication forks via replication fork reversal (RFR). RuvA specifically binds to HJ cruciform DNA, conferring on it an open structure. The RuvB hexamer acts as an ATP-dependent pump, pulling dsDNA into and through the RuvAB complex. HJ branch migration allows RuvC to scan DNA until it finds its consensus sequence, where it cleaves and resolves the cruciform DNA. This is Holliday junction branch migration complex subunit RuvA from Bartonella tribocorum (strain CIP 105476 / IBS 506).